Reading from the N-terminus, the 438-residue chain is tRNA-2-methylthio-N(6)-dimethylallyladenosine synthase (438 aa).

The MTTase N-terminal domain maps to 3-123 (KRLFVKTYGC…LPEMVAQAAR (121 aa)). 6 residues coordinate [4Fe-4S] cluster: C12, C48, C86, C160, C164, and C167. The 229-residue stretch at 146–374 (HAEGTSAFLS…QALLLDQTMR (229 aa)) folds into the Radical SAM core domain. In terms of domain architecture, TRAM spans 377–438 (HACVGREMRI…HPNSLEAVPA (62 aa)).

It belongs to the methylthiotransferase family. MiaB subfamily. Monomer. Requires [4Fe-4S] cluster as cofactor.

The protein localises to the cytoplasm. The catalysed reaction is N(6)-dimethylallyladenosine(37) in tRNA + (sulfur carrier)-SH + AH2 + 2 S-adenosyl-L-methionine = 2-methylsulfanyl-N(6)-dimethylallyladenosine(37) in tRNA + (sulfur carrier)-H + 5'-deoxyadenosine + L-methionine + A + S-adenosyl-L-homocysteine + 2 H(+). Functionally, catalyzes the methylthiolation of N6-(dimethylallyl)adenosine (i(6)A), leading to the formation of 2-methylthio-N6-(dimethylallyl)adenosine (ms(2)i(6)A) at position 37 in tRNAs that read codons beginning with uridine. The polypeptide is tRNA-2-methylthio-N(6)-dimethylallyladenosine synthase (Paramagnetospirillum magneticum (strain ATCC 700264 / AMB-1) (Magnetospirillum magneticum)).